We begin with the raw amino-acid sequence, 640 residues long: ESX-3 secretion system protein EccA3 (640 aa).

393-400 provides a ligand contact to ATP; it reads GPPGTGKT.

Belongs to the CbxX/CfxQ family. As to quaternary structure, part of the ESX-3 / type VII secretion system (T7SS), which is composed of cytosolic and membrane components.

The protein localises to the cytoplasm. In terms of biological role, part of an ESX-3 / type VII specialized secretion system (T7SS), which exports several proteins. EccA3 exhibits ATPase activity and may provide energy for the export of ESX-3 substrates. The sequence is that of ESX-3 secretion system protein EccA3 from Mycobacterium leprae (strain TN).